A 256-amino-acid chain; its full sequence is Biosynthetic peptidoglycan transglycosylase (256 aa).

The chain crosses the membrane as a helical span at residues 26 to 48; it reads VARWLAYVGGVFAGAWLATQLYY.

Belongs to the glycosyltransferase 51 family.

The protein localises to the cell inner membrane. It catalyses the reaction [GlcNAc-(1-&gt;4)-Mur2Ac(oyl-L-Ala-gamma-D-Glu-L-Lys-D-Ala-D-Ala)](n)-di-trans,octa-cis-undecaprenyl diphosphate + beta-D-GlcNAc-(1-&gt;4)-Mur2Ac(oyl-L-Ala-gamma-D-Glu-L-Lys-D-Ala-D-Ala)-di-trans,octa-cis-undecaprenyl diphosphate = [GlcNAc-(1-&gt;4)-Mur2Ac(oyl-L-Ala-gamma-D-Glu-L-Lys-D-Ala-D-Ala)](n+1)-di-trans,octa-cis-undecaprenyl diphosphate + di-trans,octa-cis-undecaprenyl diphosphate + H(+). Its pathway is cell wall biogenesis; peptidoglycan biosynthesis. Its function is as follows. Peptidoglycan polymerase that catalyzes glycan chain elongation from lipid-linked precursors. The chain is Biosynthetic peptidoglycan transglycosylase from Burkholderia pseudomallei (strain K96243).